Reading from the N-terminus, the 71-residue chain is Cruzioseptin-2 (71 aa).

An N-terminal signal peptide occupies residues 1–22 (MAFLKKSLFLVLFLGLVSLSIC). Positions 23-43 (EEEKREEENEEVQEDDDQSEE) are excised as a propeptide. Q68 carries the post-translational modification Glutamine amide. The propeptide occupies 70–71 (EQ).

In terms of tissue distribution, expressed by the skin glands.

The protein localises to the secreted. In terms of biological role, has antimicrobial activity against Gram-negative bacterium E.coli (MIC=26.35 uM), against Gram-positive bacterium S.aureus (MIC=6.59 uM) and against fungus C.albicans (MIC=13.18 uM). At higher concentrations also has a bactericidal and fungicidal effect. Has hemagglutinating activity against horse erythrocytes. This chain is Cruzioseptin-2, found in Cruziohyla calcarifer (Splendid leaf frog).